We begin with the raw amino-acid sequence, 440 residues long: NK1 transcription factor-related protein 1 (440 aa).

Over residues 1-13 (MSTSGPAAPGDVP) the composition is skewed to low complexity. 3 disordered regions span residues 1–82 (MSTS…RPTS), 145–291 (GVAA…PRRA), and 342–387 (KWKK…PMGA). The segment covering 14–31 (ALPPPPPGPGSGPAPPAP) has biased composition (pro residues). Composition is skewed to low complexity over residues 62-74 (VPAV…AARP) and 145-158 (GVAA…TSAG). Polar residues predominate over residues 170–181 (GYSSGSGRSPTA). The segment covering 182–198 (DSEDEAPEDEDEEEAPE) has biased composition (acidic residues). A compositionally biased stretch (gly residues) spans 210-222 (GGSGGLGARGSGC). The span at 237–269 (AAPGPRGNSPGAPGPPATATGAGSAGSTPQGAA) shows a compositional bias: low complexity. The segment at residues 288–347 (PRRARTAFTYEQLVALENKFKATRYLSVCERLNLALSLSLTETQVKIWFQNRRTKWKKQN) is a DNA-binding region (homeobox). A compositionally biased stretch (gly residues) spans 356-374 (TGGGGGPGPGAGPGAGLPG).

This sequence belongs to the NK-1 homeobox family.

It localises to the nucleus. May be required for the coordinated crosstalk of factors involved in the maintenance of energy homeostasis, possibly by regulating the transcription of specific factors involved in energy balance. The chain is NK1 transcription factor-related protein 1 from Mus musculus (Mouse).